Consider the following 298-residue polypeptide: ER-bound oxygenase mpaB (298 aa).

The Lumenal segment spans residues 1–24 (MDKGTSFFTTPSFSATTRAIFNTM). The helical transmembrane segment at 25–45 (PQWFSFAVGLLIAYPLLINSL) threads the bilayer. Residues 46-298 (RYRRLKQLQK…RLRKAMLYVE (253 aa)) lie on the Cytoplasmic side of the membrane.

Belongs to the mpaB oxygenase family.

The protein localises to the endoplasmic reticulum membrane. The enzyme catalyses 4-farnesyl-3,5-dihydroxy-6-methylphthalide + AH2 + 2 O2 = (4E,8E)-10-(4,6-dihydroxy-7-methyl-3-oxo-1,3-dihydro-2-benzofuran-5-yl)-4,8-dimethyldeca-4,8-dienoate + acetone + A + H2O + H(+). It participates in secondary metabolite biosynthesis; terpenoid biosynthesis. ER-bound oxygenase; part of the gene cluster that mediates the biosynthesis of mycophenolic acid (MPA), the first isolated antibiotic natural product in the world obtained from a culture of Penicillium brevicompactum in 1893. MpaB catalyzes the oxidative cleavage the C19-C20 double bond in farnesyl-DHMP (FDHMP) to yield FDHMP-3C via a mycophenolic aldehyde intermediate. The first step of the pathway is the synthesis of 5-methylorsellinic acid (5MOA) by the cytosolic polyketide synthase mpaC. 5MOA is then converted to the phthalide compound 5,7-dihydroxy-4,6-dimethylphthalide (DHMP) by the endoplasmic reticulum-bound cytochrome P450 monooxygenase mpaDE. MpaDE first catalyzes hydroxylation of 5-MOA to 4,6-dihydroxy-2-(hydroxymethyl)-3-methylbenzoic acid (DHMB). MpaDE then acts as a lactone synthase that catalyzes the ring closure to convert DHMB into DHMP. The next step is the prenylation of DHMP by the Golgi apparatus-associated prenyltransferase mpaA to yield farnesyl-DHMP (FDHMP). The ER-bound oxygenase mpaB then mediates the oxidative cleavage the C19-C20 double bond in FDHMP to yield FDHMP-3C via a mycophenolic aldehyde intermediate. The O-methyltransferase mpaG catalyzes the methylation of FDHMP-3C to yield MFDHMP-3C. After the cytosolic methylation of FDHMP-3C, MFDHMP-3C enters into peroxisomes probably via free diffusion due to its low molecular weight. Upon a peroxisomal CoA ligation reaction, catalyzed by a beta-oxidation component enzyme acyl-CoA ligase ACL891, MFDHMP-3C-CoA would then be restricted to peroxisomes for the following beta-oxidation pathway steps. The peroxisomal beta-oxidation machinery than converts MFDHMP-3C-CoA into MPA_CoA, via a beta-oxidation chain-shortening process. Finally mpaH acts as a peroxisomal acyl-CoA hydrolase with high substrate specificity toward MPA-CoA to release the final product MPA. This chain is ER-bound oxygenase mpaB, found in Penicillium roqueforti (strain FM164).